Consider the following 437-residue polypeptide: Transmembrane protease serine 4 (437 aa).

Over 1-32 (MLQDPDSDQPLNSLDVKPLRKPRIPMETFRKV) the chain is Cytoplasmic. The helical; Signal-anchor for type II membrane protein transmembrane segment at 33–53 (GIPIIIALLSLASIIIVVVLI) threads the bilayer. Residues 54 to 437 (KVILDKYYFL…WIYNVWKAEL (384 aa)) lie on the Extracellular side of the membrane. The LDL-receptor class A domain maps to 61–93 (YFLCGQPLHFIPRKQLCDGELDCPLGEDEEHCV). Intrachain disulfides connect C64–C83, C77–C92, C127–C183, C140–C193, C196–C310, C230–C246, C356–C372, and C383–C410. Positions 94-204 (KSFPEGPAVA…ACGKSLKTPR (111 aa)) constitute an SRCR domain. 2 N-linked (GlcNAc...) asparagine glycosylation sites follow: N130 and N178. The Peptidase S1 domain occupies 205 to 434 (VVGVEEASVD…YLNWIYNVWK (230 aa)). Catalysis depends on charge relay system residues H245 and D290. The active-site Charge relay system is S387.

This sequence belongs to the peptidase S1 family. In terms of processing, proteolytically processed; probably by an autocatalytic mechanism. In terms of tissue distribution, high levels in pancreatic, gastric, colorectal and ampullary cancer. Very weak expression in normal gastrointestinal and urogenital tract. Coexpressed with ACE2 within mature enterocytes.

Its subcellular location is the cell membrane. It localises to the secreted. In terms of biological role, plasma membrane-anchored serine protease that directly induces processing of pro-uPA/PLAU into the active form through proteolytic activity. Seems to be capable of activating ENaC. (Microbial infection) In gut epithelial cells, facilitates human coronavirus SARS-CoV-2 infection through, at least, the cleavage of coronavirus spike glycoproteins which activates the glycoprotein for host cell entry. The protein is Transmembrane protease serine 4 of Homo sapiens (Human).